Reading from the N-terminus, the 250-residue chain is Beta-lactamase HcpA (250 aa).

A signal peptide spans 1–25; that stretch reads MLGSVKKTLFGVLCLGALCLRGLMA. TPR repeat units lie at residues 29-62, 67-98, 100-133, 134-169, and 170-202; these read AKEL…KEGF, LGAF…NDGY, CRLL…LNHA, EGCT…LKDS, and PGCI…KDGR. Cystine bridges form between Cys56–Cys64, Cys92–Cys100, Cys128–Cys136, Cys164–Cys172, Cys196–Cys204, and Cys232–Cys240.

This sequence belongs to the hcp beta-lactamase family.

It localises to the secreted. It catalyses the reaction a beta-lactam + H2O = a substituted beta-amino acid. With respect to regulation, inhibited by cloxacillin and oxacillin but not by ACA derivatives or metal chelators. Slowly hydrolyzes 6-aminopenicillinic acid and 7-aminocephalosporanic acid (ACA) derivatives. May be involved in the synthesis of the cell wall peptidoglycan. In Helicobacter pylori (strain J99 / ATCC 700824) (Campylobacter pylori J99), this protein is Beta-lactamase HcpA (hcpA).